A 479-amino-acid polypeptide reads, in one-letter code: GTPase Obg (479 aa).

One can recognise an Obg domain in the interval threonine 2–valine 159. Positions histidine 61–leucine 87 are disordered. The OBG-type G domain occupies alanine 160–glycine 331. GTP is bound by residues glycine 166–serine 173, phenylalanine 191–valine 195, aspartate 212–glycine 215, asparagine 283–aspartate 286, and serine 312–valine 314. 2 residues coordinate Mg(2+): serine 173 and threonine 193. The 83-residue stretch at proline 349 to proline 431 folds into the OCT domain. Over residues leucine 440–arginine 453 the composition is skewed to basic and acidic residues. The segment at leucine 440 to phenylalanine 479 is disordered. A compositionally biased stretch (acidic residues) spans glutamate 470–phenylalanine 479.

Belongs to the TRAFAC class OBG-HflX-like GTPase superfamily. OBG GTPase family. Monomer. Mg(2+) is required as a cofactor.

The protein localises to the cytoplasm. Functionally, an essential GTPase which binds GTP, GDP and possibly (p)ppGpp with moderate affinity, with high nucleotide exchange rates and a fairly low GTP hydrolysis rate. Plays a role in control of the cell cycle, stress response, ribosome biogenesis and in those bacteria that undergo differentiation, in morphogenesis control. This is GTPase Obg from Streptomyces avermitilis (strain ATCC 31267 / DSM 46492 / JCM 5070 / NBRC 14893 / NCIMB 12804 / NRRL 8165 / MA-4680).